The chain runs to 562 residues: Potassium-transporting ATPase potassium-binding subunit (562 aa).

12 consecutive transmembrane segments (helical) span residues 6–26 (FLLI…LGGF), 62–82 (YALA…VLLM), 132–152 (GLTV…FALI), 175–195 (LYVL…QGVL), 253–273 (FVQM…FGQV), 283–303 (LIWA…YAEL), 327–347 (FGIL…CGAV), 356–376 (ALGG…FGGV), 379–399 (GLYG…LMIG), 416–436 (MTAL…ALAL), 483–503 (LLLA…VLAI), and 526–546 (LFIG…FIPA).

The protein belongs to the KdpA family. As to quaternary structure, the system is composed of three essential subunits: KdpA, KdpB and KdpC.

It localises to the cell inner membrane. Its function is as follows. Part of the high-affinity ATP-driven potassium transport (or Kdp) system, which catalyzes the hydrolysis of ATP coupled with the electrogenic transport of potassium into the cytoplasm. This subunit binds the periplasmic potassium ions and delivers the ions to the membrane domain of KdpB through an intramembrane tunnel. This is Potassium-transporting ATPase potassium-binding subunit from Yersinia pseudotuberculosis serotype I (strain IP32953).